Consider the following 552-residue polypeptide: Amino-acid acetyltransferase, mitochondrial (552 aa).

A mitochondrion-targeting transit peptide spans 1 to 32 (MIKTWIRCLTTEVRYHQPNAHGRSLVMSVLNS). The 167-residue stretch at 379–545 (QTGKSDPVSK…LRDYAKYVRD (167 aa)) folds into the N-acetyltransferase domain.

The protein belongs to the acetyltransferase family.

The protein localises to the mitochondrion. It carries out the reaction L-glutamate + acetyl-CoA = N-acetyl-L-glutamate + CoA + H(+). The protein operates within amino-acid biosynthesis; L-arginine biosynthesis; N(2)-acetyl-L-ornithine from L-glutamate: step 1/4. N-acetylglutamate synthase involved in arginine biosynthesis. The polypeptide is Amino-acid acetyltransferase, mitochondrial (ARG2) (Kluyveromyces lactis (strain ATCC 8585 / CBS 2359 / DSM 70799 / NBRC 1267 / NRRL Y-1140 / WM37) (Yeast)).